The chain runs to 600 residues: RNA-binding protein 47 (600 aa).

The span at 1-25 (MTAEDSASAVAMSNPSPSSSSKSSS) shows a compositional bias: low complexity. Positions 1–37 (MTAEDSASAVAMSNPSPSSSSKSSSGHPQHHCTVPEG) are disordered. 3 RRM domains span residues 82-160 (CEIF…SSVD), 162-244 (CRLF…WAEP), and 257-329 (KILY…LAKP).

It belongs to the RRM RBM47 family. In terms of assembly, homodimer. May interact with MAVS; may regulate MAVS lysosomal degradation.

The protein localises to the nucleus. It is found in the cytoplasm. Its function is as follows. Single-stranded RNA-binding protein that functions in a variety of RNA processes, including alternative splicing, RNA stabilization, and RNA editing. Independently of its RNA-binding activity, could negatively regulate MAVS by promoting its lysosomal degradation. This is RNA-binding protein 47 (rbm47) from Danio rerio (Zebrafish).